A 55-amino-acid polypeptide reads, in one-letter code: Small ribosomal subunit protein uS14 (55 aa).

The interval 1 to 20 is disordered; that stretch reads MSFEPSGPHSHRKPFGKGSR. The Zn(2+) site is built by cysteine 22, cysteine 25, cysteine 38, and cysteine 41.

The protein belongs to the universal ribosomal protein uS14 family. Requires Zn(2+) as cofactor.

This Encephalitozoon cuniculi (strain GB-M1) (Microsporidian parasite) protein is Small ribosomal subunit protein uS14 (RPS29).